The sequence spans 329 residues: RNA polymerase sigma factor SigB (329 aa).

The segment covering 1–12 (MTSPSDVEASTE) has biased composition (polar residues). Residues 1–27 (MTSPSDVEASTETVDRGSRRNQTNDNP) are disordered. Positions 120-133 (DLIQEGNLGLIRAM) match the Polymerase core binding motif. The segment at residues 290–309 (LDQIGRQFGLSRERVRQIER) is a DNA-binding region (H-T-H motif).

Belongs to the sigma-70 factor family.

Functionally, sigma factors are initiation factors that promote the attachment of RNA polymerase to specific initiation sites and are then released. This chain is RNA polymerase sigma factor SigB (sigB), found in Corynebacterium diphtheriae (strain ATCC 700971 / NCTC 13129 / Biotype gravis).